The chain runs to 279 residues: Shikimate dehydrogenase (NADP(+)) (279 aa).

Residues 19–21 (SRS) and Thr66 contribute to the shikimate site. Lys70 (proton acceptor) is an active-site residue. Shikimate-binding residues include Asn91 and Asp106. NADP(+) is bound by residues 129 to 133 (GAGGA) and Phe222. A shikimate-binding site is contributed by Tyr224. Gly243 contacts NADP(+).

The protein belongs to the shikimate dehydrogenase family. In terms of assembly, homodimer.

The catalysed reaction is shikimate + NADP(+) = 3-dehydroshikimate + NADPH + H(+). It functions in the pathway metabolic intermediate biosynthesis; chorismate biosynthesis; chorismate from D-erythrose 4-phosphate and phosphoenolpyruvate: step 4/7. In terms of biological role, involved in the biosynthesis of the chorismate, which leads to the biosynthesis of aromatic amino acids. Catalyzes the reversible NADPH linked reduction of 3-dehydroshikimate (DHSA) to yield shikimate (SA). The sequence is that of Shikimate dehydrogenase (NADP(+)) from Anaeromyxobacter sp. (strain Fw109-5).